Consider the following 344-residue polypeptide: N-acetyl-gamma-glutamyl-phosphate reductase (344 aa).

Residue Cys150 is part of the active site.

It belongs to the NAGSA dehydrogenase family. Type 1 subfamily.

It localises to the cytoplasm. It carries out the reaction N-acetyl-L-glutamate 5-semialdehyde + phosphate + NADP(+) = N-acetyl-L-glutamyl 5-phosphate + NADPH + H(+). It participates in amino-acid biosynthesis; L-arginine biosynthesis; N(2)-acetyl-L-ornithine from L-glutamate: step 3/4. Functionally, catalyzes the NADPH-dependent reduction of N-acetyl-5-glutamyl phosphate to yield N-acetyl-L-glutamate 5-semialdehyde. The protein is N-acetyl-gamma-glutamyl-phosphate reductase of Pseudomonas entomophila (strain L48).